Consider the following 217-residue polypeptide: Membrane-spanning 4-domains subfamily A member 6C (217 aa).

Polar residues predominate over residues 1–20; the sequence is MIPQVVTNETITTISPNGIN. The tract at residues 1 to 33 is disordered; that stretch reads MIPQVVTNETITTISPNGINFPQKDESQPTQQR. Residues 1–46 lie on the Cytoplasmic side of the membrane; sequence MIPQVVTNETITTISPNGINFPQKDESQPTQQRQDSLKKHLKAEIK. A helical transmembrane segment spans residues 47–67; sequence VIVAIQIMCAVTVLALGIILA. Residues 68–84 lie on the Extracellular side of the membrane; it reads SVPPVPYFNSVFSVLLK. Residues 85–105 form a helical membrane-spanning segment; sequence SGYPFIGALFFIASGILSIIT. Residues 106-121 lie on the Cytoplasmic side of the membrane; the sequence is ERKSTKPLVDASLTLN. A helical membrane pass occupies residues 122 to 142; sequence ILSVSFAFVGIIIISVSLAGL. Topologically, residues 143-186 are extracellular; that stretch reads HPASEQCKQSKELSLIEHDYYQPFYNSDRSECAVTKSILTGALS. Residues 187-207 traverse the membrane as a helical segment; it reads VMLIISVLELGLALLSAMLWL. The Cytoplasmic portion of the chain corresponds to 208 to 217; it reads REGVLTSLRM.

Belongs to the MS4A family. In terms of tissue distribution, expressed only by thymus, spleen, peripheral lymph node and bone marrow.

It is found in the membrane. Its function is as follows. May be involved in signal transduction as a component of a multimeric receptor complex. This chain is Membrane-spanning 4-domains subfamily A member 6C (Ms4a6c), found in Mus musculus (Mouse).